The sequence spans 213 residues: MKGRFLVLEGIDGCGKTTQLRQLAEWLPDSGLMPEGATLHLTREPGGTPLGRALRELLLHPPDEAAPCPEAELLMYAADRAQHVQRRILPALACGDWVLSDRFSGSTLAYQGDGRGLDRALILDLERIATAGLVPDVTLWLDLSLEASMARREERTEDRIEAEGQAFLARVADGFRQLAAERGWVGIPAALSPKEVHQAIRLALEGHAALRRR.

10–17 (GIDGCGKT) is a binding site for ATP.

The protein belongs to the thymidylate kinase family.

It carries out the reaction dTMP + ATP = dTDP + ADP. In terms of biological role, phosphorylation of dTMP to form dTDP in both de novo and salvage pathways of dTTP synthesis. This Synechococcus sp. (strain WH7803) protein is Thymidylate kinase.